The following is a 395-amino-acid chain: Protein PIN-LIKES 7 (395 aa).

At 1 to 8 (MGFLELLE) the chain is on the lumenal side. Residues 9–29 (VASMPIVQVLLISVLGAFLAT) traverse the membrane as a helical segment. At 30–45 (DYCSLLSADTRRSVNK) the chain is on the cytoplasmic side. The chain crosses the membrane as a helical span at residues 46–66 (LVFVVFTPCIMFANLAETVTL). Residues 67–73 (QDIISWW) are Lumenal-facing. The helical transmembrane segment at 74-94 (FMPINVGITFLVGGILGWLVV) threads the bilayer. Topologically, residues 95–106 (KLLNPKPQLHGL) are cytoplasmic. Residues 107–127 (IIATCASGNMGNLMLILVPAI) traverse the membrane as a helical segment. Topologically, residues 128 to 142 (CDEEGSPFGNRSVCR) are lumenal. Residues 143-163 (SIGLSYASFSMALGGFYIWTY) traverse the membrane as a helical segment. Over 164 to 232 (SYQLVRSSAT…KDLLHQILEE (69 aa)) the chain is Cytoplasmic. The helical transmembrane segment at 233 to 253 (LFAPPTIGAILGFVFGATNWL) threads the bilayer. The Lumenal segment spans residues 254–272 (RNLIIGENAPLRVIQDSVK). Residues 273 to 293 (LLGEGTIPCITLILGGNLIQG) traverse the membrane as a helical segment. The Cytoplasmic segment spans residues 294–302 (LRSSAVKKS). A helical membrane pass occupies residues 303-323 (VIVGVIIVRYILLPVVGVGVV). The Lumenal portion of the chain corresponds to 324–340 (QLAGNLGYLPPDPLFRY). The chain crosses the membrane as a helical span at residues 341-361 (VLMLQFALPPAMNISTMAQLF). Residues 362–369 (DVAQDECS) lie on the Cytoplasmic side of the membrane. Residues 370-390 (VIFLWTYLVASLALTVWSTIF) form a helical membrane-spanning segment. Over 391 to 395 (LSILS) the chain is Lumenal.

Belongs to the auxin efflux carrier (TC 2.A.69.2) family. In terms of tissue distribution, expressed in seedlings, rosette and cauline leaves, stems and flowers.

The protein localises to the endoplasmic reticulum membrane. Functionally, involved in cellular auxin homeostasis by regulating auxin metabolism. Regulates intracellular auxin accumulation at the endoplasmic reticulum and thus auxin availability for nuclear auxin signaling. The chain is Protein PIN-LIKES 7 from Arabidopsis thaliana (Mouse-ear cress).